The primary structure comprises 579 residues: Mitochondrial distribution and morphology protein 36 (579 aa).

Positions 1–27 (MDENGTVKPGYELKGLNSGNSRSNMDK) are disordered. Phosphoserine is present on Ser-42. Disordered regions lie at residues 378 to 401 (TPIN…GRRL) and 446 to 518 (DNKH…ESQS). The span at 379–390 (PINSSDSDNLSN) shows a compositional bias: polar residues. Residues 446-463 (DNKHSTKDTDSNIRRNEH) show a composition bias toward basic and acidic residues. A compositionally biased stretch (low complexity) spans 495-518 (PSQSSSRMSTLPLSPSSSLLESQS).

Its function is as follows. Involved in mitochondrial distribution and morphology. This Saccharomyces cerevisiae (strain ATCC 204508 / S288c) (Baker's yeast) protein is Mitochondrial distribution and morphology protein 36 (MDM36).